Reading from the N-terminus, the 620-residue chain is Lamin-B2 (620 aa).

Residues 1-38 are disordered; the sequence is MSPPSPGRRREQRRPRAAATMATPLPGRAGGPATPLSP. A head region spans residues 1 to 48; that stretch reads MSPPSPGRRREQRRPRAAATMATPLPGRAGGPATPLSPTRLSRLQEKE. Phosphothreonine is present on residues T23 and T34. S37 is modified (phosphoserine). An IF rod domain is found at 46-402; that stretch reads EKEELRELND…KLLEGEEERL (357 aa). Positions 49–83 are coil 1A; that stretch reads ELRELNDRLAHYIDRVRALELENDRLLLKISEKEE. K77 participates in a covalent cross-link: Glycyl lysine isopeptide (Lys-Gly) (interchain with G-Cter in SUMO2). K81 is modified (N6-acetyllysine; alternate). K81 is covalently cross-linked (Glycyl lysine isopeptide (Lys-Gly) (interchain with G-Cter in SUMO2); alternate). The interval 84 to 95 is linker 1; sequence VTTREVSGIKAL. The tract at residues 96–229 is coil 1B; it reads YESELADARR…DFRKSVFEEE (134 aa). Glycyl lysine isopeptide (Lys-Gly) (interchain with G-Cter in SUMO2) cross-links involve residues K195 and K255. The tract at residues 230 to 256 is linker 2; it reads VRETRRRHERRLVEVDSSRQQEYDFKM. The tract at residues 257–400 is coil 2; that stretch reads AQALEELRSQ…YRKLLEGEEE (144 aa). Phosphoserine occurs at positions 316 and 407. The tract at residues 399-464 is disordered; it reads EERLKLSPSP…GTGGSGGFHL (66 aa). The tail stretch occupies residues 401 to 620; the sequence is RLKLSPSPSS…RTTSRGCYVM (220 aa). Low complexity predominate over residues 404–431; it reads LSPSPSSRVTVSRATSSSSGSLSATGRL. O-linked (GlcNAc) threonine glycosylation is present at T413. Residues S420, S422, S424, and S426 each carry the phosphoserine modification. R433 is modified (omega-N-methylarginine). A Nuclear localization signal motif is present at residues 435 to 440; that stretch reads KRKRLE. Residues 444-453 show a composition bias toward low complexity; the sequence is PLGSGPSVLG. In terms of domain architecture, LTD spans 462–579; the sequence is FHLAQQASAS…EEVAMRTVKK (118 aa). A Glycyl lysine isopeptide (Lys-Gly) (interchain with G-Cter in SUMO2) cross-link involves residue K489. S497 carries the post-translational modification Phosphoserine. The interval 581-620 is disordered; the sequence is SVMRENENGEEEEEEAEFGEEDLFHQQGDPRTTSRGCYVM. Over residues 588–601 the composition is skewed to acidic residues; the sequence is NGEEEEEEAEFGEE. The segment covering 609–620 has biased composition (polar residues); that stretch reads DPRTTSRGCYVM. A Cysteine methyl ester modification is found at C617. A lipid anchor (S-farnesyl cysteine) is attached at C617. A propeptide spans 618–620 (removed in mature form); the sequence is YVM.

Belongs to the intermediate filament family. In terms of assembly, dimer. Lamin dimers then assemble into dimeric head-to-tail polymers. Ultimately, two head-to-tail polymers assemble laterally into a protofilament with a uniformly shaped rod of 3.5 nm in diameter. Interacts with TMEM43. Post-translationally, B-type lamins undergo a series of modifications, such as farnesylation and phosphorylation. Increased phosphorylation of the lamins occurs before envelope disintegration and probably plays a role in regulating lamin associations. Phosphorylation plays a key role in lamin organization, subcellular localization and nuclear envelope disintegration. Phosphorylation by CDK1 at Ser-37 and Ser-407 at the onset of mitosis drives lamin disassembly and nuclear envelope breakdown.

It is found in the nucleus lamina. Its function is as follows. Lamins are intermediate filament proteins that assemble into a filamentous meshwork, and which constitute the major components of the nuclear lamina, a fibrous layer on the nucleoplasmic side of the inner nuclear membrane. Lamins provide a framework for the nuclear envelope, bridging the nuclear envelope and chromatin, thereby playing an important role in nuclear assembly, chromatin organization, nuclear membrane and telomere dynamics. The structural integrity of the lamina is strictly controlled by the cell cycle, as seen by the disintegration and formation of the nuclear envelope in prophase and telophase, respectively. The protein is Lamin-B2 (LMNB2) of Homo sapiens (Human).